Reading from the N-terminus, the 311-residue chain is Methionyl-tRNA formyltransferase (311 aa).

112–115 (SLLP) contributes to the (6S)-5,6,7,8-tetrahydrofolate binding site.

This sequence belongs to the Fmt family.

It carries out the reaction L-methionyl-tRNA(fMet) + (6R)-10-formyltetrahydrofolate = N-formyl-L-methionyl-tRNA(fMet) + (6S)-5,6,7,8-tetrahydrofolate + H(+). Its function is as follows. Attaches a formyl group to the free amino group of methionyl-tRNA(fMet). The formyl group appears to play a dual role in the initiator identity of N-formylmethionyl-tRNA by promoting its recognition by IF2 and preventing the misappropriation of this tRNA by the elongation apparatus. This is Methionyl-tRNA formyltransferase from Bradyrhizobium diazoefficiens (strain JCM 10833 / BCRC 13528 / IAM 13628 / NBRC 14792 / USDA 110).